The primary structure comprises 360 residues: Phospho-N-acetylmuramoyl-pentapeptide-transferase (360 aa).

The next 10 helical transmembrane spans lie at 26-46 (AILALLTALMFSLWWGPKLIE), 74-94 (MGGLLILAGIFIGVLLWGDLG), 97-117 (YVWVMLFVLGSFGLIGFIDDY), 132-152 (WKYIFQSLAALVVAFYLFYST), 168-188 (ILPQLGLMFIVLTYFTIVGAS), 199-219 (GLAIMPTVMVAAAFALIAYLS), 236-256 (SGELVIVCTAIVGAGLGFLWF), 263-283 (VFMGDVGSLSLGAALGTIAVL), 288-308 (ILLVIMGGVFVMETLSVILQV), and 338-358 (VIVRFWIISLFLVLLGLATLK).

The protein belongs to the glycosyltransferase 4 family. MraY subfamily. Requires Mg(2+) as cofactor.

The protein resides in the cell inner membrane. The enzyme catalyses UDP-N-acetyl-alpha-D-muramoyl-L-alanyl-gamma-D-glutamyl-meso-2,6-diaminopimeloyl-D-alanyl-D-alanine + di-trans,octa-cis-undecaprenyl phosphate = di-trans,octa-cis-undecaprenyl diphospho-N-acetyl-alpha-D-muramoyl-L-alanyl-D-glutamyl-meso-2,6-diaminopimeloyl-D-alanyl-D-alanine + UMP. It participates in cell wall biogenesis; peptidoglycan biosynthesis. Functionally, catalyzes the initial step of the lipid cycle reactions in the biosynthesis of the cell wall peptidoglycan: transfers peptidoglycan precursor phospho-MurNAc-pentapeptide from UDP-MurNAc-pentapeptide onto the lipid carrier undecaprenyl phosphate, yielding undecaprenyl-pyrophosphoryl-MurNAc-pentapeptide, known as lipid I. The protein is Phospho-N-acetylmuramoyl-pentapeptide-transferase of Shewanella amazonensis (strain ATCC BAA-1098 / SB2B).